The chain runs to 271 residues: MSEALIGGGAKKVYILSRRRDVLESAAAKHEGILIPIQCDVTSKASLQSAVDIVTKDSGYVNLLIANSGTLGPTNRLDHDLSIHELRKNVFDNVSFEDFNNTLSVNTTGAYFTMLAFLELLDAGNKNALKGGFGGPSTEGGAPSIQSQVIFTSSLGAYSRDRLSPPAYSASKSALSHLAKHASTNLAKYGIRVNVLAPGLFPSEIATLMTANRDPATENLGDRMFIPARKFGGAEEMGGTVLYLASRAGSYCNGLILVNDGGRLSVMLSEY.

Residues serine 17, aspartate 40, and asparagine 67 each contribute to the NADP(+) site. Serine 153 (proton donor) is an active-site residue. Residues tyrosine 168, lysine 172, and serine 203 each contribute to the NADP(+) site. The Proton acceptor role is filled by tyrosine 168. Lysine 172 (lowers pKa of active site Tyr) is an active-site residue.

It belongs to the short-chain dehydrogenases/reductases (SDR) family.

The protein operates within mycotoxin biosynthesis. Its function is as follows. Short-chain dehydrogenase/reductase; part of the satratoxin SC1 cluster involved in the biosynthesis of satratoxins, trichothecene mycotoxins that are associated with human food poisonings. Satratoxins are suggested to be made by products of multiple gene clusters (SC1, SC2 and SC3) that encode 21 proteins in all, including polyketide synthases, acetyltransferases, and other enzymes expected to modify the trichothecene skeleton. SC1 encodes 10 proteins, SAT1 to SAT10. The largest are SAT8, which encodes a putative polyketide synthase (PKS) with a conventional non-reducing architecture, and SAT10, a putative protein containing four ankyrin repeats and thus may be involved in protein scaffolding. The putative short-chain reductase SAT3 may assist the PKS in some capacity. SAT6 contains a secretory lipase domain and acts probably as a trichothecene esterase. SAT5 encodes a putative acetyltransferase, and so, with SAT6, may affect endogenous protection from toxicity. The probable transcription factor SAT9 may regulate the expression of the SC1 cluster. SC2 encodes proteins SAT11 to SAT16, the largest of which encodes the putative reducing PKS SAT13. SAT11 is a cytochrome P450 monooxygenase, while SAT14 and SAT16 are probable acetyltransferases. The SC2 cluster may be regulated by the transcription factor SAT15. SC3 is a small cluster that encodes 5 proteins, SAT17 to SAT21. SAT21 is a putative MFS-type transporter which may have a role in exporting secondary metabolites. The four other proteins putatively encoded in SC3 include the taurine hydroxylase-like protein SAT17, the O-methyltransferase SAT18, the acetyltransferase SAT19, and the Cys6-type zinc finger SAT20, the latter being probably involved in regulation of SC3 expression. The sequence is that of Short-chain dehydrogenase/reductase SAT3 from Stachybotrys chartarum (strain CBS 109288 / IBT 7711) (Toxic black mold).